Here is a 150-residue protein sequence, read N- to C-terminus: Lipoprotein signal peptidase (150 aa).

3 helical membrane-spanning segments follow: residues 8–28 (FYAL…LAHA), 58–78 (GFSW…GWFL), and 81–101 (TTGS…NVFD). Residues Asp116 and Asp132 contribute to the active site. The helical transmembrane segment at 126-146 (VVFNIADLFILAGVFGTFLFL) threads the bilayer.

Belongs to the peptidase A8 family.

The protein resides in the cell membrane. The enzyme catalyses Release of signal peptides from bacterial membrane prolipoproteins. Hydrolyzes -Xaa-Yaa-Zaa-|-(S,diacylglyceryl)Cys-, in which Xaa is hydrophobic (preferably Leu), and Yaa (Ala or Ser) and Zaa (Gly or Ala) have small, neutral side chains.. It participates in protein modification; lipoprotein biosynthesis (signal peptide cleavage). Functionally, this protein specifically catalyzes the removal of signal peptides from prolipoproteins. This Tropheryma whipplei (strain TW08/27) (Whipple's bacillus) protein is Lipoprotein signal peptidase.